Reading from the N-terminus, the 920-residue chain is 3-hydroxy-3-methylglutaryl-coenzyme A reductase (920 aa).

Residues 12-32 (FCASHPWEVIVALLTITACML) traverse the membrane as a helical segment. N-linked (GlcNAc...) asparagine glycosylation occurs at Asn-37. A disordered region spans residues 62-85 (GAGSGASGTIPPSSMGGSATSSRH). Residues 71-82 (IPPSSMGGSATS) show a composition bias toward polar residues. Residues 106–263 (DVILMTIVRC…MTFYPACLSL (158 aa)) form the SSD domain. Transmembrane regions (helical) follow at residues 107-129 (VILMTIVRCTAVLYCYYQFCSLH), 136-156 (VLGIAGLFTVFSSFIFTTAII), 170-190 (LFFLLLVIDLSNSGRLAQLAL), 208-228 (LLGPAISLDTIVEVLLVGVGT), and 237-257 (VLCMFAVLSVLVNYVVFMTFY). N-linked (GlcNAc...) asparagine glycans are attached at residues Asn-342 and Asn-346. Residues 364-384 (SADHIVISIVLIALVVKFICF) form a helical membrane-spanning segment. The interval 385–498 (DNRDPLPDQL…EEIVSIVHAG (114 aa)) is linker. Residues Asn-443 and Asn-475 are each glycosylated (N-linked (GlcNAc...) asparagine). Residues 499–829 (GTHCPLHKIE…TCTMPSLEVG (331 aa)) are catalytic. Active-site charge relay system residues include Glu-586, Lys-717, and Asp-793. N-linked (GlcNAc...) asparagine glycans are attached at residues Asn-797 and Asn-802. Catalysis depends on His-892, which acts as the Proton donor. N-linked (GlcNAc...) asparagine glycans are attached at residues Asn-896 and Asn-910.

It belongs to the HMG-CoA reductase family. In terms of tissue distribution, highly expressed in embryonic gonadal mesoderm, where expression is initially broad, and then becomes restricted to a segmental pattern at stage 11. Expression is then further restricted to a cluster of cells in each of parasegments 10, 11 and 12, corresponding to the developing gonadal mesoderm. Not expressed in pole cells.

It localises to the endoplasmic reticulum membrane. The enzyme catalyses (R)-mevalonate + 2 NADP(+) + CoA = (3S)-3-hydroxy-3-methylglutaryl-CoA + 2 NADPH + 2 H(+). It functions in the pathway metabolic intermediate biosynthesis; (R)-mevalonate biosynthesis; (R)-mevalonate from acetyl-CoA: step 3/3. Its activity is regulated as follows. The activity of HMG-CoA-reductase is suppressed by exogenous mevalonate. Its function is as follows. Synthesis of mevalonate for the production of non-sterol isoprenoids, which are essential for growth differentiation. Provides spatial information during embryogenesis to guide migrating primordial germ cells (the pole cells) from the ectoderm to the mesoderm. Also required for association of the pole cells with the gonadal mesoderm. The chain is 3-hydroxy-3-methylglutaryl-coenzyme A reductase (Hmgcr) from Drosophila melanogaster (Fruit fly).